Here is a 271-residue protein sequence, read N- to C-terminus: Tryptophan synthase alpha chain (271 aa).

Active-site proton acceptor residues include E49 and D60.

It belongs to the TrpA family. As to quaternary structure, tetramer of two alpha and two beta chains.

The enzyme catalyses (1S,2R)-1-C-(indol-3-yl)glycerol 3-phosphate + L-serine = D-glyceraldehyde 3-phosphate + L-tryptophan + H2O. The protein operates within amino-acid biosynthesis; L-tryptophan biosynthesis; L-tryptophan from chorismate: step 5/5. In terms of biological role, the alpha subunit is responsible for the aldol cleavage of indoleglycerol phosphate to indole and glyceraldehyde 3-phosphate. The sequence is that of Tryptophan synthase alpha chain from Burkholderia pseudomallei (strain K96243).